The primary structure comprises 79 residues: Orally active insecticidal peptide (79 aa).

The first 19 residues, 1–19 (MRVLFIIAGLALLSVVCYT), serve as a signal peptide directing secretion. A propeptide spanning residues 20–44 (SEMKERSSFNEVLSEFFAADEPQER) is cleaved from the precursor. 3 disulfides stabilise this stretch: C46-C61, C53-C66, and C60-C73. A77 is subject to Alanine amide.

This sequence belongs to the neurotoxin 03 (Tx2) family. 01 subfamily. In terms of tissue distribution, expressed by the venom gland.

The protein localises to the secreted. Its function is as follows. Probable ion channel inhibitor. Shows insecticidal activity when injected into mealworms. This Selenotypus plumipes (Australian featherleg tarantula) protein is Orally active insecticidal peptide.